Consider the following 376-residue polypeptide: DNA polymerase IV (376 aa).

One can recognise a UmuC domain in the interval 6–187; sequence IIHIDMDAFF…LSIGKFYGVG (182 aa). Asp-10 and Asp-105 together coordinate Mg(2+). The active site involves Glu-106.

The protein belongs to the DNA polymerase type-Y family. In terms of assembly, monomer. It depends on Mg(2+) as a cofactor.

The protein resides in the cytoplasm. The catalysed reaction is DNA(n) + a 2'-deoxyribonucleoside 5'-triphosphate = DNA(n+1) + diphosphate. Poorly processive, error-prone DNA polymerase involved in untargeted mutagenesis. Copies undamaged DNA at stalled replication forks, which arise in vivo from mismatched or misaligned primer ends. These misaligned primers can be extended by PolIV. Exhibits no 3'-5' exonuclease (proofreading) activity. May be involved in translesional synthesis, in conjunction with the beta clamp from PolIII. This Desulfotalea psychrophila (strain LSv54 / DSM 12343) protein is DNA polymerase IV.